Consider the following 241-residue polypeptide: Homeobox protein TGIF2LX (241 aa).

Disordered regions lie at residues 1-58 (MEAA…GNLP) and 125-207 (KTGK…ELVS). Residues 10-39 (ETQSPVQKDSPAKTQSPAQDTSIMSRNNAD) are compositionally biased toward polar residues. A DNA-binding region (homeobox; TALE-type) is located at residues 48–111 (EHKKKRKGNL…INARRRILPD (64 aa)).

It belongs to the TALE/TGIF homeobox family.

The protein resides in the nucleus. Functionally, may have a transcription role in testis. This Pan troglodytes (Chimpanzee) protein is Homeobox protein TGIF2LX (TGIF2LX).